A 627-amino-acid polypeptide reads, in one-letter code: MEEADRILIHSLRQAGTAVPPDVQTLRAFTTELVVEAVVRCLRVINPAVGSGLSPLLPLAMSARFRLAMSLAQACMDLGYPLELGYQNFLYPSEPDLRDLLLFLAERLPTDASEDADQPAGDSAILLRAIGSQIRDQLALPWVPPHLRTPKLQHLQGSALQKPFHASRLVVPELSSRGEPREFQASPLLLPVPTQVPQPVGRVASLLEHHALQLCQQTGRDRPGDEDWVHRTSRLPPQEDTRAQRQRLQKQLTEHLRQSWGLLGAPIQARDLGELLQAWGAGAKTGAPKGSRFTHSEKFTFHLEPQAQATQVSDVPATSRRPEQVTWAAQEQELESLREQLEGVNRSIEEVEADMKTLGVSFVQAESECRHSKLSTAEREQALRLKSRAVELLPDGTANLAKLQLVVENSAQRVIHLAGQWEKHRVPLLAEYRHLRKLQDCRELESSRRLAEIQELHQSVRAAAEEARRKEEVYKQLMSELETLPRDVSRLAYTQRILEIVGNIRKQKEEITKILSDTKELQKEINSLSGKLDRTFAVTDELVFKDAKKDDAVRKAYKYLAALHENCSQLIQTIEDTGTIMREVRDLEEQIETELGKKTLSNLEKIREDYRALRQENAGLLGRVREA.

The segment at 1–321 (MEEADRILIH…VSDVPATSRR (321 aa)) is sufficient for interaction with COMMD1. A sufficicient and required for interaction with CCDC93 region spans residues 1–447 (MEEADRILIH…LQDCRELESS (447 aa)). The tract at residues 218–243 (TGRDRPGDEDWVHRTSRLPPQEDTRA) is disordered. Residues 219–230 (GRDRPGDEDWVH) are compositionally biased toward basic and acidic residues. A coiled-coil region spans residues 320–627 (RRPEQVTWAA…AGLLGRVREA (308 aa)). Serine 410 carries the post-translational modification Phosphoserine.

It belongs to the CCDC22 family. In terms of assembly, component of the commander complex consisting of the CCC subcomplex and the retriever subcomplex. Component of the CCC (COMMD/CCDC22/CCDC93) subcomplex consisting of COMMD1, COMMD2, COMMD3, COMMD4, COMMD5, COMMD6, COMMD7, COMMD8, COMMD9, COMMD10, CCDC22 and CCDC93. Forms a coiled-coil heterodimer with CCDC22; this heterodimer interacts with the guanine nucleotide exchange factor DENND10; the interaction is direct. Interacts with CUL1, CUL2, CUL3, SKP1, BTRC. Interacts with SNX17 and SNX31. Interacts with CPNE1 and CPNE4. As to expression, widely expressed in adult tissues and in fetal liver and brain, with highest levels in prostate and lowest in skeletal muscle.

It is found in the endosome. The protein localises to the cytoplasm. The protein resides in the cytoskeleton. Its subcellular location is the microtubule organizing center. It localises to the centrosome. Its function is as follows. Component of the commander complex that is essential for endosomal recycling of transmembrane cargos; the Commander complex is composed of composed of the CCC subcomplex and the retriever subcomplex. Component of the CCC complex, which is involved in the regulation of endosomal recycling of surface proteins, including integrins, signaling receptor and channels. Involved in regulation of NF-kappa-B signaling. Promotes ubiquitination of I-kappa-B-kinase subunit IKBKB and its subsequent proteasomal degradation leading to NF-kappa-B activation; the function may involve association with COMMD8 and a CUL1-dependent E3 ubiquitin ligase complex. May down-regulate NF-kappa-B activity via association with COMMD1 and involving a CUL2-dependent E3 ubiquitin ligase complex. Regulates the cellular localization of COMM domain-containing proteins, such as COMMD1 and COMMD10. Component of the CCC complex, which is involved in the regulation of endosomal recycling of surface proteins, including integrins, signaling receptor and channels. The CCC complex associates with SNX17, retriever and WASH complexes to prevent lysosomal degradation and promote cell surface recycling of numerous cargos such as integrins ITGA5:ITGB1. Plays a role in copper ion homeostasis. Involved in copper-dependent ATP7A trafficking between the trans-Golgi network and vesicles in the cell periphery; the function is proposed to depend on its association within the CCC complex and cooperation with the WASH complex on early endosomes. (Microbial infection) The CCC complex, in collaboration with the heterotrimeric retriever complex, mediates the exit of human papillomavirus to the cell surface. The sequence is that of Coiled-coil domain-containing protein 22 (CCDC22) from Homo sapiens (Human).